The primary structure comprises 420 residues: Serine hydroxymethyltransferase (420 aa).

Residues Leu121 and 125-127 (GHL) each bind (6S)-5,6,7,8-tetrahydrofolate. The residue at position 230 (Lys230) is an N6-(pyridoxal phosphate)lysine. (6S)-5,6,7,8-tetrahydrofolate-binding positions include Glu246 and 354-356 (SPF).

The protein belongs to the SHMT family. In terms of assembly, homodimer. It depends on pyridoxal 5'-phosphate as a cofactor.

The protein localises to the cytoplasm. The catalysed reaction is (6R)-5,10-methylene-5,6,7,8-tetrahydrofolate + glycine + H2O = (6S)-5,6,7,8-tetrahydrofolate + L-serine. It participates in one-carbon metabolism; tetrahydrofolate interconversion. The protein operates within amino-acid biosynthesis; glycine biosynthesis; glycine from L-serine: step 1/1. Functionally, catalyzes the reversible interconversion of serine and glycine with tetrahydrofolate (THF) serving as the one-carbon carrier. This reaction serves as the major source of one-carbon groups required for the biosynthesis of purines, thymidylate, methionine, and other important biomolecules. Also exhibits THF-independent aldolase activity toward beta-hydroxyamino acids, producing glycine and aldehydes, via a retro-aldol mechanism. In Rickettsia rickettsii (strain Iowa), this protein is Serine hydroxymethyltransferase.